We begin with the raw amino-acid sequence, 176 residues long: Orotate phosphoribosyltransferase (176 aa).

5-phospho-alpha-D-ribose 1-diphosphate is bound by residues Arg90, Lys91, Lys94, and 116–124 (EDVTTTGGS). The orotate site is built by Thr120 and Arg148.

The protein belongs to the purine/pyrimidine phosphoribosyltransferase family. PyrE subfamily. Homodimer. It depends on Mg(2+) as a cofactor.

It catalyses the reaction orotidine 5'-phosphate + diphosphate = orotate + 5-phospho-alpha-D-ribose 1-diphosphate. It functions in the pathway pyrimidine metabolism; UMP biosynthesis via de novo pathway; UMP from orotate: step 1/2. Functionally, catalyzes the transfer of a ribosyl phosphate group from 5-phosphoribose 1-diphosphate to orotate, leading to the formation of orotidine monophosphate (OMP). The polypeptide is Orotate phosphoribosyltransferase (Methanocaldococcus jannaschii (strain ATCC 43067 / DSM 2661 / JAL-1 / JCM 10045 / NBRC 100440) (Methanococcus jannaschii)).